Consider the following 632-residue polypeptide: Extracellular metalloproteinase 2 (632 aa).

A signal peptide spans methionine 1–glycine 19. Positions leucine 20–serine 244 are excised as a propeptide. Asparagine 270 is a glycosylation site (N-linked (GlcNAc...) asparagine). Histidine 429 is a binding site for Zn(2+). The active site involves glutamate 430. Histidine 433 serves as a coordination point for Zn(2+).

It belongs to the peptidase M36 family. The cofactor is Zn(2+).

The protein resides in the secreted. In terms of biological role, secreted metalloproteinase probably acting as a virulence factor. The polypeptide is Extracellular metalloproteinase 2 (MEP2) (Trichophyton tonsurans (Scalp ringworm fungus)).